A 211-amino-acid polypeptide reads, in one-letter code: Small ribosomal subunit protein eS8 (211 aa).

This sequence belongs to the eukaryotic ribosomal protein eS8 family.

The polypeptide is Small ribosomal subunit protein eS8 (rps8) (Dictyostelium discoideum (Social amoeba)).